Here is a 249-residue protein sequence, read N- to C-terminus: Globin-like protein 9 (249 aa).

Residues 20–43 (TNKGPNGLARRGTQRGCSRSKSTR) form a disordered region. The region spanning 52–205 (SLTFSQKQAL…LIDELRGGFE (154 aa)) is the Globin domain. Heme is bound by residues His116 and His148.

This sequence belongs to the globin family.

The protein is Globin-like protein 9 (glb-9) of Caenorhabditis elegans.